The following is a 220-amino-acid chain: Charged multivesicular body protein 2a (220 aa).

Positions E12–Q53 form a coiled coil. A disordered region spans residues A184–D220. The MIT-interacting motif signature appears at A208–R218. A compositionally biased stretch (basic and acidic residues) spans E211 to D220.

The protein belongs to the SNF7 family. As to quaternary structure, probable core component of the endosomal sorting required for transport complex III (ESCRT-III). ESCRT-III components are thought to multimerize to form a flat lattice on the perimeter membrane of the endosome.

The protein resides in the late endosome membrane. It localises to the cytoplasm. Its function is as follows. Probable core component of the endosomal sorting required for transport complex III (ESCRT-III) which is involved in multivesicular bodies (MVBs) formation and sorting of endosomal cargo proteins into MVBs. MVBs contain intraluminal vesicles (ILVs) that are generated by invagination and scission from the limiting membrane of the endosome and mostly are delivered to lysosomes enabling degradation of membrane proteins, such as stimulated growth factor receptors, lysosomal enzymes and lipids. The chain is Charged multivesicular body protein 2a (chmp2a) from Danio rerio (Zebrafish).